Here is a 118-residue protein sequence, read N- to C-terminus: Beta-2-microglobulin (118 aa).

Residues 1 to 21 (MESRWGIVVIGLLCCVSWVEA) form the signal peptide. The Ig-like C1-type domain occupies 26–113 (PKIQVYTRSP…THNSVTKSVK (88 aa)). A disulfide bridge connects residues C46 and C101.

Belongs to the beta-2-microglobulin family. As to quaternary structure, heterodimer of an alpha chain and a beta chain. Beta-2-microglobulin is the beta-chain of major histocompatibility complex class I molecules.

Its subcellular location is the secreted. Functionally, component of the class I major histocompatibility complex (MHC). Involved in the presentation of peptide antigens to the immune system. This is Beta-2-microglobulin (B2M) from Tachyglossus aculeatus aculeatus (Southeast Australian short-beaked echidna).